The sequence spans 81 residues: Cell division protein ZapB (81 aa).

Residues 5-81 (LEVFEKLESK…QALLGRMEEV (77 aa)) are a coiled coil. A disordered region spans residues 43–64 (VHSAQNGREELERENQQLREQQ). The segment covering 49–59 (GREELERENQQ) has biased composition (basic and acidic residues).

Belongs to the ZapB family. In terms of assembly, homodimer. The ends of the coiled-coil dimer bind to each other, forming polymers. Interacts with FtsZ.

It is found in the cytoplasm. Non-essential, abundant cell division factor that is required for proper Z-ring formation. It is recruited early to the divisome by direct interaction with FtsZ, stimulating Z-ring assembly and thereby promoting cell division earlier in the cell cycle. Its recruitment to the Z-ring requires functional FtsA or ZipA. The protein is Cell division protein ZapB of Enterobacter sp. (strain 638).